Here is an 858-residue protein sequence, read N- to C-terminus: Potassium transporter 7 (858 aa).

2 stretches are compositionally biased toward acidic residues: residues 1–16 and 38–53; these read MAEE…EEID and QDDD…DNDG. Positions 1 to 68 are disordered; sequence MAEESSMEGS…LESDEDEIPE (68 aa). The Cytoplasmic segment spans residues 1–104; the sequence is MAEESSMEGS…DYEDLTVGRK (104 aa). Residues 105 to 125 form a helical membrane-spanning segment; the sequence is VLLAFQTLGVVFGDVGTSPLY. At 126 to 147 the chain is on the extracellular side; that stretch reads TFSVMFSKSPVQEKEDVIGALS. A helical transmembrane segment spans residues 148–168; that stretch reads LVLYTLLLVPLIKYVLVVLWA. Over 169-232 the chain is Cytoplasmic; sequence NDDGEGGTFA…KLENSLILKK (64 aa). The helical transmembrane segment at 233 to 253 threads the bilayer; the sequence is ILLVLVLAGTSMVIADGVVTP. At 254-269 the chain is on the extracellular side; sequence AMSVMSAVGGLKVGVD. The chain crosses the membrane as a helical span at residues 270–290; sequence VVEQDQVVMISVAFLVILFSL. The Cytoplasmic portion of the chain corresponds to 291-297; sequence QKYGTSK. A helical transmembrane segment spans residues 298 to 318; sequence MGLVVGPALLIWFCSLAGIGI. Over 319–345 the chain is Extracellular; it reads YNLIKYDSSVYRAFNPVHIYYFFKRNS. A helical membrane pass occupies residues 346–366; it reads INAWYALGGCILCATGSEALF. Topologically, residues 367-380 are cytoplasmic; sequence ADLCYFSVRSVQLT. Residues 381-401 form a helical membrane-spanning segment; sequence FVCLVLPCLMLGYMGQAAYLM. The Extracellular segment spans residues 402–413; the sequence is ENHADASQAFFS. Residues 414 to 434 form a helical membrane-spanning segment; the sequence is SVPGSAFWPVLFIANIAALIA. Topologically, residues 435–470 are cytoplasmic; sequence SRTMTTATFSCIKQSTALGCFPRLKIIHTSRKFMGQ. The chain crosses the membrane as a helical span at residues 471 to 491; the sequence is IYIPVLNWFLLAVCLVVVCSI. Over 492-496 the chain is Extracellular; the sequence is SSIDE. Residues 497-517 traverse the membrane as a helical segment; the sequence is IGNAYGMAELGVMMTTTILVT. Leucine 518 is a topological domain (cytoplasmic). Residues 519-539 traverse the membrane as a helical segment; it reads IMLLIWQINIVIVIAFLVVFL. Over 540-552 the chain is Extracellular; sequence GVELVFFSSVIAS. Residues 553–573 traverse the membrane as a helical segment; it reads VGDGSWIILVFAVIMFGIMYI. Over 574–858 the chain is Cytoplasmic; that stretch reads WNYGSKLRYE…LMQVGMTYMV (285 aa). The segment at 707-731 is disordered; that stretch reads QERSLESDGNDDSDSEEDFPGSRVV. The span at 714–725 shows a compositional bias: acidic residues; that stretch reads DGNDDSDSEEDF. Serine 719 and serine 721 each carry phosphoserine.

Belongs to the HAK/KUP transporter (TC 2.A.72.3) family.

It is found in the cell membrane. Probable potassium transporter. The protein is Potassium transporter 7 (POT7) of Arabidopsis thaliana (Mouse-ear cress).